We begin with the raw amino-acid sequence, 695 residues long: Potassium voltage-gated channel subfamily KQT member 4 (695 aa).

Residues 1 to 21 (MAEAPPRRLGLGPPPGDAPRA) are disordered. At 1–96 (MAEAPPRRLG…VYNVLERPRG (96 aa)) the chain is on the cytoplasmic side. R93 provides a ligand contact to a 1,2-diacyl-sn-glycero-3-phospho-(1D-myo-inositol-4,5-bisphosphate). The helical transmembrane segment at 97 to 118 (WAFVYHVFIFLLVFSCLVLSVL) threads the bilayer. Over 119 to 129 (STIQEHQELAN) the chain is Extracellular. Residues 130 to 152 (ECLLILEFVMIVVFGLEYIVRVW) traverse the membrane as a helical segment. The Cytoplasmic portion of the chain corresponds to 153–168 (SAGCCCRYRGWQGRFR). Residues 169–191 (FARKPFCVIDFIVFVASVAVIAA) form a helical membrane-spanning segment. A 1,2-diacyl-sn-glycero-3-phospho-(1D-myo-inositol-4,5-bisphosphate) is bound at residue K172. Residues 192-202 (GTQGNIFATSA) lie on the Extracellular side of the membrane. A helical; Voltage-sensor membrane pass occupies residues 203–223 (LRSMRFLQILRMVRMDRRGGT). Residues R219, R220, K225, and S235 each coordinate a 1,2-diacyl-sn-glycero-3-phospho-(1D-myo-inositol-4,5-bisphosphate). The Cytoplasmic segment spans residues 224 to 235 (WKLLGSVVYAHS). The helical transmembrane segment at 236-258 (KELITAWYIGFLVLIFASFLVYL) threads the bilayer. Residues 259-270 (AEKDANSDFSSY) lie on the Extracellular side of the membrane. The pore-forming intramembrane region spans 271 to 292 (ADSLWWGTITLTTIGYGDKTPH). A topological domain (extracellular) is located at residue T293. Residues 294–322 (WLGRVLAAGFALLGISFFALPAGILGSGF) form a helical membrane-spanning segment. The Cytoplasmic segment spans residues 323 to 695 (ALKVQEQHRQ…ISRSVSTNMD (373 aa)). H330 and K333 together coordinate a 1,2-diacyl-sn-glycero-3-phospho-(1D-myo-inositol-4,5-bisphosphate). An interaction with CALM region spans residues 342 to 351 (AANLIQAAWR). Disordered stretches follow at residues 400 to 480 (RRAP…TKVQ) and 496 to 515 (RLKPRTSAEDAPSEEVAEEK). 2 stretches are compositionally biased toward polar residues: residues 443–452 (GSSQRRTGPS) and 463–480 (TSPSSEQVGEATSPTKVQ). The interval 535-549 (RSIRILKFLVAKRKF) is interaction with CALM. Residues 546–650 (KRKFKETLRP…SRCLRSGTSA (105 aa)) are C-terminal assembly domain (tetramerization). Residues 587-606 (VGRGPGDRKAREKGDKGPSD) form a disordered region. Positions 591 to 605 (PGDRKAREKGDKGPS) are enriched in basic and acidic residues. Residues 615 to 636 (MMGRVVKVEKQVQSIEHKLDLL) are a coiled coil.

This sequence belongs to the potassium channel family. KQT (TC 1.A.1.15) subfamily. Kv7.4/KCNQ4 sub-subfamily. As to quaternary structure, homotetramer. Interacts (via C-terminus) with calmodulin; forms a heterooctameric structure (with 4:4 KCNQ1:CALM stoichiometry); the interaction is calcium-independent, constitutive, participates in the proper assembly of a functional channel. The interaction with calcium-free CALM controls channel trafficking whereas interaction with calcium-bound CALM regulates channel gating. May form a functional heteromultimeric channel with KCNQ3. Interacts with HSP90AB1; promotes cell surface expression of KCNQ4. In terms of tissue distribution, expressed in the outer, but not the inner, sensory hair cells of the cochlea. Slightly expressed in heart, brain and skeletal muscle.

It localises to the basal cell membrane. It carries out the reaction K(+)(in) = K(+)(out). With respect to regulation, two molecules of phosphatidylinositol-4,5-bisphosphate (PIP2-I and PIP2-II) are essential to activate KCNQ4 channel by inducing the coupling of the voltage-sensing domain (VSD) and the pore-forming domain (PD). Upon channel activation, PIP2-I and PIP2-II disrupt the VSD-calmodulin/CALM interaction, causing the release of CALM from the VSD which triggers the opening of the gate. Calcium suppresses KCNQ4 channel current through calcium-bound CALM C-terminus. Therefore CALM acts as calcium sensor that controls channel activity. ML213 potentiates KCNQ4 channel. KCNQ4 channel is blocked by linopirdin, XE991 and bepridil, whereas clofilium is without significant effect. Muscarinic agonist oxotremorine-M strongly suppress KCNQ4 current in CHO cells in which cloned KCNQ4 channels were coexpressed with M1 muscarinic receptors. Functionally, pore-forming subunit of the voltage-gated potassium (Kv) channel involved in the regulation of sensory cells excitability in the cochlea. KCNQ4/Kv7.4 channel is composed of 4 pore-forming subunits assembled as tetramers. Promotes the outflow of potassium ions in the repolarization phase of action potential which plays a role in regulating membrane potential of excitable cells. The channel conducts a slowly activating and deactivating current. Current often shows some inward rectification at positive potentials. Channel may be selectively permeable in vitro to other cations besides potassium, in decreasing order of affinity K(+) = Rb(+) &gt; Cs(+) &gt; Na(+). Important for normal physiological function of inner ear such as sensory perception of sound. This chain is Potassium voltage-gated channel subfamily KQT member 4, found in Homo sapiens (Human).